A 274-amino-acid chain; its full sequence is 2,3,4,5-tetrahydropyridine-2,6-dicarboxylate N-succinyltransferase (274 aa).

The substrate site is built by R106 and D143.

The protein belongs to the transferase hexapeptide repeat family. Homotrimer.

Its subcellular location is the cytoplasm. The catalysed reaction is (S)-2,3,4,5-tetrahydrodipicolinate + succinyl-CoA + H2O = (S)-2-succinylamino-6-oxoheptanedioate + CoA. It functions in the pathway amino-acid biosynthesis; L-lysine biosynthesis via DAP pathway; LL-2,6-diaminopimelate from (S)-tetrahydrodipicolinate (succinylase route): step 1/3. In Paracidovorax citrulli (strain AAC00-1) (Acidovorax citrulli), this protein is 2,3,4,5-tetrahydropyridine-2,6-dicarboxylate N-succinyltransferase.